The chain runs to 344 residues: Phenylalanine--tRNA ligase alpha subunit (344 aa).

Glu255 is a Mg(2+) binding site.

Belongs to the class-II aminoacyl-tRNA synthetase family. Phe-tRNA synthetase alpha subunit type 1 subfamily. Tetramer of two alpha and two beta subunits. Mg(2+) serves as cofactor.

Its subcellular location is the cytoplasm. It carries out the reaction tRNA(Phe) + L-phenylalanine + ATP = L-phenylalanyl-tRNA(Phe) + AMP + diphosphate + H(+). The sequence is that of Phenylalanine--tRNA ligase alpha subunit from Persephonella marina (strain DSM 14350 / EX-H1).